A 712-amino-acid chain; its full sequence is Diacylglycerol kinase 2 (712 aa).

2 consecutive Phorbol-ester/DAG-type zinc fingers follow at residues 72–133 and 145–208; these read HHQW…AKDC and RHHW…GDAC. A DAGKc domain is found at 338–479; the sequence is PDARPLLVFI…RWSVKIVEES (142 aa).

The protein belongs to the eukaryotic diacylglycerol kinase family. As to quaternary structure, monomer. Expressed in rosette and cauline leaves, flowers, siliques and roots. Highly expressed in young leaves and at lower levels in older leaves. In young seedlings, expressed at the root-shoot junction zone and vascular bundles of the cotyledons. In older plants, expressed in root tip, central cylinder, root hair, leaf mesophyll cells and guard cells, sepals, filaments of the anthers, stigma, valves of young and early adult siliques and hilum of seeds.

It is found in the endoplasmic reticulum. The catalysed reaction is a 1,2-diacyl-sn-glycerol + ATP = a 1,2-diacyl-sn-glycero-3-phosphate + ADP + H(+). It carries out the reaction 1-octadecanoyl-2-(5Z,8Z,11Z,14Z-eicosatetraenoyl)-sn-glycerol + ATP = 1-octadecanoyl-2-(5Z,8Z,11Z,14Z-eicosatetraenoyl)-sn-glycero-3-phosphate + ADP + H(+). It catalyses the reaction 1,2-di-(9Z-octadecenoyl)-sn-glycerol + ATP = 1,2-di-(9Z-octadecenoyl)-sn-glycero-3-phosphate + ADP + H(+). Functionally, phosphorylates the second messenger diacylglycerol (DAG) to generate phosphatidic acid (PA), another important signaling molecule. PA is required for plant development and responses to abiotic stress and pathogen attack. May be involved in the accumulation of PA during cold stress. Involved in response to freezing stress by modulating the accumulation of PA. Exhibits high specificity for the unsaturated DAG analogs 1-stearoyl-2-arachidonoyl-sn-glycerol (1,2-SAG) and 1,2-dioleoyl-sn-glycerol (1,2-DOG). Exhibits high specificity for 1-palmitoyl, 2-oleoyl-sn-glycerol (1,2 POG), 1-stearoyl, 2-linoleoyl-sn-glycerol (1,2-SLG) and 1-oleoyl, 2-palmitoyl-sn-glycerol (1,2-OPG). Has almost no activity toward 1,2-dioctanoyl-sn-glycerol (1,2-DOCG), 1,2-dipalmitoyl-sn-glycerol (1,2-DPG), 1,2-dimyristoyl-sn-glycerol (1,2-DMG) and 1-oleoyl-2-acetyl-sn-glycerol (1,2-OAG). Functions together with DGK4 in male gametophyte development and biosynthesis of phosphatidylglycerol and phosphatidylinositol in the endoplasmic reticulum (ER). Involved in PA production for pollen grain growth, as well as leaf and root growth. The polypeptide is Diacylglycerol kinase 2 (Arabidopsis thaliana (Mouse-ear cress)).